Reading from the N-terminus, the 304-residue chain is m7GpppX diphosphatase (304 aa).

Residues Glu-152, Lys-174, and 235–246 (HYLPSYYHLHVH) contribute to the substrate site. The Histidine triad motif signature appears at 242-246 (HLHVH). His-244 acts as the Nucleophile in catalysis.

Belongs to the HIT family.

The protein localises to the cytoplasm. The protein resides in the nucleus. The catalysed reaction is a 5'-end (N(7)-methyl 5'-triphosphoguanosine)-ribonucleoside in mRNA + H2O = N(7)-methyl-GMP + a 5'-end diphospho-ribonucleoside in mRNA + 2 H(+). Its function is as follows. Decapping scavenger enzyme that catalyzes the cleavage of a residual cap structure following the degradation of mRNAs by the 3'-&gt;5' exosome-mediated mRNA decay pathway. Hydrolyzes cap analog structures like 7-methylguanosine nucleoside triphosphate (m7GpppG) with up to 10 nucleotide substrates (small capped oligoribonucleotides) and specifically releases 5'-phosphorylated RNA fragments and 7-methylguanosine monophosphate (m7GMP). Has no activity towards mRNA molecules longer than 25 nucleotides. May also play a role in the 5'-&gt;3 mRNA decay pathway; m7GDP, the downstream product released by the 5'-&gt;3' mRNA mediated decapping activity, may be also converted by DCS1 to m7GMP. Inhibits mRNA translation. Binds to the m7GpppG cap analog. The sequence is that of m7GpppX diphosphatase (nhm1) from Schizosaccharomyces pombe (strain 972 / ATCC 24843) (Fission yeast).